A 111-amino-acid polypeptide reads, in one-letter code: Cytochrome c3, 26 kDa (111 aa).

Heme c-binding residues include histidine 30, histidine 33, cysteine 38, cysteine 41, histidine 42, histidine 43, cysteine 54, cysteine 59, histidine 60, histidine 77, cysteine 86, cysteine 89, histidine 90, cysteine 105, cysteine 108, and histidine 109.

In terms of assembly, homodimer. Heme c serves as cofactor.

It localises to the periplasm. Participates in sulfate respiration coupled with phosphorylation by transferring electrons from the enzyme dehydrogenase to ferredoxin. The sequence is that of Cytochrome c3, 26 kDa from Desulfomicrobium norvegicum (strain DSM 1741 / NCIMB 8310) (Desulfovibrio baculatus (strain Norway 4)).